An 824-amino-acid polypeptide reads, in one-letter code: Probable acyl-CoA dehydrogenase IBR3 (824 aa).

G2 is modified (N-acetylglycine). FAD contacts are provided by residues 555–565 (FAMTEPQVASS), 589–591 (WTS), R706, Q776, and 776–780 (QVHGA). A Microbody targeting signal motif is present at residues 822-824 (SKL).

This sequence belongs to the acyl-CoA dehydrogenase family. Requires FAD as cofactor.

Its subcellular location is the peroxisome. It carries out the reaction a 2,3-saturated acyl-CoA + A = a 2,3-dehydroacyl-CoA + AH2. Involved with IBR1 and IBR10 in the peroxisomal beta-oxidation of indole-3-butyric acid (IBA) to form indole-3-acetic acid (IAA), a biologically active auxin. May be responsible for catalyzing the first step in IBA-CoA beta-oxidation. May play a role in defense response to pathogenic bacteria. This is Probable acyl-CoA dehydrogenase IBR3 from Arabidopsis thaliana (Mouse-ear cress).